Reading from the N-terminus, the 473-residue chain is Cannabinoid receptor 1 (473 aa).

The Extracellular portion of the chain corresponds to 1–117 (MKSILDGLAD…CFMILNPSQQ (117 aa)). Residues 2 to 23 (KSILDGLADTTFRTITTDLLYV) are required for mitochondrial localization. Residues Asn78 and Asn84 are each glycosylated (N-linked (GlcNAc...) asparagine). A helical membrane pass occupies residues 118–143 (LAIAVLSLTLGTFTVLENLLVLCVIL). The Cytoplasmic portion of the chain corresponds to 144-155 (HSRSLRCRPSYH). The helical transmembrane segment at 156 to 176 (FIGSLAVADLLGSVIFVYSFV) threads the bilayer. Residues 177-188 (DFHVFHRKDSPN) lie on the Extracellular side of the membrane. The helical transmembrane segment at 189–213 (VFLFKLGGVTASFTASVGSLFLTAI) threads the bilayer. Topologically, residues 214-233 (DRYISIHRPLAYKRIVTRPK) are cytoplasmic. A helical membrane pass occupies residues 234-256 (AVVAFCLMWTIAIVIAVLPLLGW). Residues 257–274 (NCKKLQSVCSDIFPLIDE) lie on the Extracellular side of the membrane. The chain crosses the membrane as a helical span at residues 275–300 (TYLMFWIGVTSVLLLFIVYAYMYILW). At 301–345 (KAHSHAVRMIQRGTQKSIIIHTSEDGKVQVTRPDQARMDIRLAKT) the chain is on the cytoplasmic side. Residues 346-366 (LVLILVVLIICWGPLLAIMVY) traverse the membrane as a helical segment. The Extracellular segment spans residues 367 to 378 (DVFGKMNKLIKT). Residues 379–400 (VFAFCSMLCLLNSTVNPIIYAL) traverse the membrane as a helical segment. Residues 401 to 473 (RSKDLRHAFR…VSTDTSAEAL (73 aa)) are Cytoplasmic-facing. A lipid anchor (S-palmitoyl cysteine) is attached at Cys416. Ser426 and Ser430 each carry phosphoserine.

The protein belongs to the G-protein coupled receptor 1 family. Interacts (via C-terminus) with CNRIP1. Associates with G protein alpha subunits, including G(i) alpha-1/GNAI1, G(i) alpha-3/GNAI3 and G(o)-alpha/GNAO1; palmitoylation is important for interaction with GNAI3 and GNAO1. Palmitoylation at Cys-416 is important for recruitment at both plasma membrane and lipid rafts and association with G protein alpha subunits. Expressed in the brain, in the striatum, medial septum, descending arm of the band of Broca, the amygdaloid nucleus, the hippocampus and cortex (at protein level). High levels in the lateral striatum. In rostral brain regions, high expression levels in the dorsal lateral striatum, while in the caudal brain regions, high levels are observed in the ventral lateral striatum. Expressed in monocytes/macrophages (at protein level). Expressed in striated muscles and in vascular smooth muscles cells (at protein level).

The protein localises to the cell membrane. It is found in the mitochondrion outer membrane. The protein resides in the cell projection. Its subcellular location is the axon. It localises to the presynapse. Hemopressin, a peptide derived from hemoglobin subunit alpha (HBA1 and/or HBA2), acts as an antagonist peptide: hemopressin-binding efficiently blocks cannabinoid receptor CNR1 and subsequent signaling. In terms of biological role, G-protein coupled receptor for cannabinoids, including endocannabinoids (eCBs), such as N-arachidonoylethanolamide (also called anandamide or AEA) and 2-arachidonoylglycerol (2-AG). Mediates many cannabinoid-induced effects, acting, among others, on food intake, memory loss, gastrointestinal motility, catalepsy, ambulatory activity, anxiety, chronic pain. Signaling typically involves reduction in cyclic AMP. In the hypothalamus, may have a dual effect on mitochondrial respiration depending upon the agonist dose and possibly upon the cell type. Increases respiration at low doses, while decreases respiration at high doses. At high doses, CNR1 signal transduction involves G-protein alpha-i protein activation and subsequent inhibition of mitochondrial soluble adenylate cyclase, decrease in cyclic AMP concentration, inhibition of protein kinase A (PKA)-dependent phosphorylation of specific subunits of the mitochondrial electron transport system, including NDUFS2. In the hypothalamus, inhibits leptin-induced reactive oxygen species (ROS) formation and mediates cannabinoid-induced increase in SREBF1 and FASN gene expression. In response to cannabinoids, drives the release of orexigenic beta-endorphin, but not that of melanocyte-stimulating hormone alpha/alpha-MSH, from hypothalamic POMC neurons, hence promoting food intake. In the hippocampus, regulates cellular respiration and energy production in response to cannabinoids. Involved in cannabinoid-dependent depolarization-induced suppression of inhibition (DSI), a process in which depolarization of CA1 postsynaptic pyramidal neurons mobilizes eCBs, which retrogradely activate presynaptic CB1 receptors, transiently decreasing GABAergic inhibitory neurotransmission. Also reduces excitatory synaptic transmission. In superior cervical ganglions and cerebral vascular smooth muscle cells, inhibits voltage-gated Ca(2+) channels in a constitutive, as well as agonist-dependent manner. Induces leptin production in adipocytes and reduces LRP2-mediated leptin clearance in the kidney, hence participating in hyperleptinemia. In adipose tissue, CNR1 signaling leads to increased expression of SREBF1, ACACA and FASN genes. In the liver, activation by endocannabinoids leads to increased de novo lipogenesis and reduced fatty acid catabolism, associated with increased expression of SREBF1/SREBP-1, GCK, ACACA, ACACB and FASN genes. May also affect de novo cholesterol synthesis and HDL-cholesteryl ether uptake. Peripherally modulates energy metabolism. In high carbohydrate diet-induced obesity, may decrease the expression of mitochondrial dihydrolipoyl dehydrogenase/DLD in striated muscles, as well as that of selected glucose/ pyruvate metabolic enzymes, hence affecting energy expenditure through mitochondrial metabolism. In response to cannabinoid anandamide, elicits a pro-inflammatory response in macrophages, which involves NLRP3 inflammasome activation and IL1B and IL18 secretion. In macrophages infiltrating pancreatic islets, this process may participate in the progression of type-2 diabetes and associated loss of pancreatic beta-cells. This is Cannabinoid receptor 1 (Cnr1) from Rattus norvegicus (Rat).